Consider the following 291-residue polypeptide: Glucose and ribitol dehydrogenase (291 aa).

The interval 1 to 35 (MASGGQFPPQKQESQPGKEHLMDPSPQHASPHYKP) is disordered. 45-69 (LVTGGDSGIGRSVCYHFALEGATVA) contacts NAD(+). Residue S183 participates in substrate binding. Residue Y196 is the Proton acceptor of the active site.

Belongs to the short-chain dehydrogenases/reductases (SDR) family. In terms of tissue distribution, expressed in embryogenic cells, somatic embryos and seeds in the later stages of development, but not in non-embryogenic cells and mature leaves.

May act as a short alcohol-polyol-sugar dehydrogenase possibly related to carbohydrate metabolism and the acquisition of desiccation tolerance. May also be involved in signal transduction. The protein is Glucose and ribitol dehydrogenase (CAISE5) of Daucus carota (Wild carrot).